Reading from the N-terminus, the 367-residue chain is Glutamate 5-kinase (367 aa).

Residue K9 coordinates ATP. 3 residues coordinate substrate: S49, D136, and N148. ATP-binding positions include 168–169 (TD) and 210–216 (TGGMKSK). The PUA domain occupies 276–350 (SGQIEIDAGA…GMQSQHIQAR (75 aa)).

This sequence belongs to the glutamate 5-kinase family.

The protein resides in the cytoplasm. The enzyme catalyses L-glutamate + ATP = L-glutamyl 5-phosphate + ADP. The protein operates within amino-acid biosynthesis; L-proline biosynthesis; L-glutamate 5-semialdehyde from L-glutamate: step 1/2. Its function is as follows. Catalyzes the transfer of a phosphate group to glutamate to form L-glutamate 5-phosphate. This chain is Glutamate 5-kinase, found in Bacillus cereus (strain ATCC 10987 / NRS 248).